Consider the following 175-residue polypeptide: Large ribosomal subunit protein uL6 (175 aa).

It belongs to the universal ribosomal protein uL6 family. In terms of assembly, part of the 50S ribosomal subunit.

Its function is as follows. This protein binds to the 23S rRNA, and is important in its secondary structure. It is located near the subunit interface in the base of the L7/L12 stalk, and near the tRNA binding site of the peptidyltransferase center. The chain is Large ribosomal subunit protein uL6 from Xanthomonas oryzae pv. oryzae (strain MAFF 311018).